Reading from the N-terminus, the 75-residue chain is Translational regulator CsrA (75 aa).

This sequence belongs to the CsrA/RsmA family. In terms of assembly, homodimer; the beta-strands of each monomer intercalate to form a hydrophobic core, while the alpha-helices form wings that extend away from the core.

The protein resides in the cytoplasm. Its function is as follows. A translational regulator that binds mRNA to regulate translation initiation and/or mRNA stability. Usually binds in the 5'-UTR at or near the Shine-Dalgarno sequence preventing ribosome-binding, thus repressing translation. Its main target seems to be the major flagellin gene, while its function is anatagonized by FliW. The chain is Translational regulator CsrA from Thermosipho melanesiensis (strain DSM 12029 / CIP 104789 / BI429).